The chain runs to 369 residues: Deoxyhypusine synthase (369 aa).

Residues 105–109 (SNLIS), 131–133 (TAG), E137, and D238 contribute to the NAD(+) site. 136 to 137 (EE) is a spermidine binding site. Residue D243 coordinates spermidine. Residue G283 coordinates NAD(+). Spermidine is bound at residue H288. 308 to 309 (TA) lines the NAD(+) pocket. Residues 314 to 316 (GSD) and 323 to 329 (EAVSWGK) each bind spermidine. Catalysis depends on K329, which acts as the Nucleophile. 342 to 343 (DA) provides a ligand contact to NAD(+).

Belongs to the deoxyhypusine synthase family. The cofactor is NAD(+).

It catalyses the reaction [eIF5A protein]-L-lysine + spermidine = [eIF5A protein]-deoxyhypusine + propane-1,3-diamine. It functions in the pathway protein modification; eIF5A hypusination. Its function is as follows. Catalyzes the NAD-dependent oxidative cleavage of spermidine and the subsequent transfer of the butylamine moiety of spermidine to the epsilon-amino group of a critical lysine residue of the eIF-5A precursor protein to form the intermediate deoxyhypusine residue. This is the first step of the post-translational modification of that lysine into an unusual amino acid residue named hypusine. Hypusination is unique to mature eIF-5A factor and is essential for its function. This chain is Deoxyhypusine synthase (Dhps), found in Rattus norvegicus (Rat).